The sequence spans 413 residues: DnaJ protein homolog (413 aa).

The J domain occupies 10–75; the sequence is NTKYYEILGV…REIYDQYGED (66 aa). The segment at 133 to 217 adopts a CR-type zinc-finger fold; the sequence is GTSKKLSLSR…CKGEKVVQEK (85 aa). CXXCXGXG motif repeat units follow at residues 146 to 153, 162 to 169, 189 to 196, and 205 to 212; these read CSKCKGKG, CPGCQGSG, CNECKGTG, and CSQCKGEK. The interval 387-413 is disordered; that stretch reads RRKQAQEAYDEDEDMHGGAQRVQCAQQ. Cys410 carries the post-translational modification Cysteine methyl ester. A lipid anchor (S-farnesyl cysteine) is attached at Cys410. A propeptide spans 411-413 (removed in mature form); that stretch reads AQQ.

Expressed in seedlings in all tissues, but exceedingly high levels in hypocotyledons and roots.

The protein localises to the cell membrane. In terms of biological role, plays a continuous role in plant development probably in the structural organization of compartments. The sequence is that of DnaJ protein homolog (DNAJ1) from Cucumis sativus (Cucumber).